The sequence spans 337 residues: Phosphate acyltransferase (337 aa).

This sequence belongs to the PlsX family. Homodimer. Probably interacts with PlsY.

Its subcellular location is the cytoplasm. It carries out the reaction a fatty acyl-[ACP] + phosphate = an acyl phosphate + holo-[ACP]. Its pathway is lipid metabolism; phospholipid metabolism. Catalyzes the reversible formation of acyl-phosphate (acyl-PO(4)) from acyl-[acyl-carrier-protein] (acyl-ACP). This enzyme utilizes acyl-ACP as fatty acyl donor, but not acyl-CoA. This chain is Phosphate acyltransferase, found in Aromatoleum aromaticum (strain DSM 19018 / LMG 30748 / EbN1) (Azoarcus sp. (strain EbN1)).